We begin with the raw amino-acid sequence, 1641 residues long: Maestro heat-like repeat-containing protein family member 1 (1641 aa).

HEAT repeat units follow at residues 3–41 (ESSM…ARPV), 159–198 (VPFL…GALE), 344–382 (CSSP…SAAA), 385–423 (EDKK…HGYL), 1048–1086 (PDQL…ERGG), 1358–1396 (LMLL…GCPD), and 1605–1641 (QVDL…VKLA).

The protein belongs to the MROH1 family. In terms of assembly, homooligomer; homooligomerizes at lysosome scission sites.

Its subcellular location is the lysosome membrane. Its function is as follows. Lysosome fission factor. Recruited to lysosomes by RAB7 (RAB7A or RAB7B) at scission sites and homooligomerizes to mediate the constriction and scission of lysosomal tubules. May sever membranes by inserting amphipathic helices into one bilayer leaflet. Lysosome fission is required to maintain their steady-state number, shape, size, composition and function, and to accomplish regeneration. In Homo sapiens (Human), this protein is Maestro heat-like repeat-containing protein family member 1.